The sequence spans 147 residues: UPF0306 protein YhbP (147 aa).

It belongs to the UPF0306 family.

The protein is UPF0306 protein YhbP of Shigella dysenteriae serotype 1 (strain Sd197).